Here is a 207-residue protein sequence, read N- to C-terminus: Guanylate kinase (207 aa).

Residues 4–184 form the Guanylate kinase-like domain; it reads GILFIISAPS…AVNDLITIIT (181 aa). Position 11–18 (11–18) interacts with ATP; it reads APSGTGKS.

The protein belongs to the guanylate kinase family.

The protein localises to the cytoplasm. It catalyses the reaction GMP + ATP = GDP + ADP. Essential for recycling GMP and indirectly, cGMP. This is Guanylate kinase (gmk) from Buchnera aphidicola subsp. Acyrthosiphon pisum (strain APS) (Acyrthosiphon pisum symbiotic bacterium).